A 241-amino-acid polypeptide reads, in one-letter code: Ribonuclease PH (241 aa).

Residues Arg-89 and Gly-127 to Arg-129 each bind phosphate.

The protein belongs to the RNase PH family. In terms of assembly, homohexameric ring arranged as a trimer of dimers.

It catalyses the reaction tRNA(n+1) + phosphate = tRNA(n) + a ribonucleoside 5'-diphosphate. In terms of biological role, phosphorolytic 3'-5' exoribonuclease that plays an important role in tRNA 3'-end maturation. Removes nucleotide residues following the 3'-CCA terminus of tRNAs; can also add nucleotides to the ends of RNA molecules by using nucleoside diphosphates as substrates, but this may not be physiologically important. Probably plays a role in initiation of 16S rRNA degradation (leading to ribosome degradation) during starvation. This Xylella fastidiosa (strain 9a5c) protein is Ribonuclease PH.